The sequence spans 244 residues: Transcriptional activator protein PhzR (244 aa).

The 66-residue stretch at 177 to 242 (AFNTDVEFSE…QAVSYAVALG (66 aa)) folds into the HTH luxR-type domain. The segment at residues 201–220 (SEEIGVIMGVCTDTVNYHHR) is a DNA-binding region (H-T-H motif).

It belongs to the autoinducer-regulated transcriptional regulatory protein family.

Functionally, positive regulator of phenazine antibiotic production. May activate the phenazine biosynthetic genes by binding to a DNA sequence upstream of them, or to an intermediate gene which, in turn, interacts with them. This is Transcriptional activator protein PhzR (phzR) from Pseudomonas fluorescens.